Reading from the N-terminus, the 244-residue chain is ATP synthase subunit a, chloroplastic (244 aa).

Transmembrane regions (helical) follow at residues 35-55, 92-112, 131-151, 196-216, and 217-237; these read QVLI…AIAV, VPFI…GALL, INTT…AGIT, LVVV…VMFL, and GLFT…AYIG.

It belongs to the ATPase A chain family. As to quaternary structure, F-type ATPases have 2 components, CF(1) - the catalytic core - and CF(0) - the membrane proton channel. CF(1) has five subunits: alpha(3), beta(3), gamma(1), delta(1), epsilon(1). CF(0) has four main subunits: a, b, b' and c.

It localises to the plastid. Its subcellular location is the chloroplast thylakoid membrane. Functionally, key component of the proton channel; it plays a direct role in the translocation of protons across the membrane. This Coffea arabica (Arabian coffee) protein is ATP synthase subunit a, chloroplastic.